Consider the following 1401-residue polypeptide: DNA-directed RNA polymerase subunit beta (1401 aa).

Belongs to the RNA polymerase beta chain family. In terms of assembly, the RNAP catalytic core consists of 2 alpha, 1 beta, 1 beta' and 1 omega subunit. When a sigma factor is associated with the core the holoenzyme is formed, which can initiate transcription.

It catalyses the reaction RNA(n) + a ribonucleoside 5'-triphosphate = RNA(n+1) + diphosphate. DNA-dependent RNA polymerase catalyzes the transcription of DNA into RNA using the four ribonucleoside triphosphates as substrates. This is DNA-directed RNA polymerase subunit beta from Zymomonas mobilis subsp. mobilis (strain ATCC 31821 / ZM4 / CP4).